The following is a 430-amino-acid chain: Gamma-glutamyl phosphate reductase (430 aa).

Belongs to the gamma-glutamyl phosphate reductase family.

Its subcellular location is the cytoplasm. The catalysed reaction is L-glutamate 5-semialdehyde + phosphate + NADP(+) = L-glutamyl 5-phosphate + NADPH + H(+). It functions in the pathway amino-acid biosynthesis; L-proline biosynthesis; L-glutamate 5-semialdehyde from L-glutamate: step 2/2. Its function is as follows. Catalyzes the NADPH-dependent reduction of L-glutamate 5-phosphate into L-glutamate 5-semialdehyde and phosphate. The product spontaneously undergoes cyclization to form 1-pyrroline-5-carboxylate. The protein is Gamma-glutamyl phosphate reductase of Psychrobacter arcticus (strain DSM 17307 / VKM B-2377 / 273-4).